The following is an 841-amino-acid chain: Microcephalin (841 aa).

One can recognise a BRCT 1 domain in the interval 1-93; that stretch reads MAAPILKDVV…AHIDESLFPA (93 aa). Ser-278, Ser-286, Ser-295, and Ser-332 each carry phosphoserine. Residue Thr-334 is modified to Phosphothreonine. 4 disordered regions span residues 340–375, 417–445, 481–507, and 562–593; these read GHLL…RKRS, PDNL…SCRS, SSPQ…SAPE, and VGLK…PRSV. Basic residues predominate over residues 342-358; it reads LLIHSRPRSSSVKRKRV. A compositionally biased stretch (polar residues) spans 433-445; it reads QLPSSPAQFSCRS. The segment covering 565 to 583 has biased composition (polar residues); it reads KSTQDKGTTSKISNSSEGE. BRCT domains are found at residues 646–736 and 757–839; these read SGKG…SFEL and YRGT…NYLL.

Interacts with CDC27 and maybe other components of the APC/C complex. Interacts with histone variant H2AX under DNA damage conditions.

It localises to the cytoplasm. Its subcellular location is the cytoskeleton. The protein resides in the microtubule organizing center. The protein localises to the centrosome. In terms of biological role, implicated in chromosome condensation and DNA damage induced cellular responses. May play a role in neurogenesis and regulation of the size of the cerebral cortex. The protein is Microcephalin of Colobus guereza (Mantled guereza).